The following is a 51-amino-acid chain: Suberization-associated anionic peroxidase 1 (51 aa).

Histidine 30 is a binding site for heme. Residue threonine 31 coordinates Ca(2+).

This sequence belongs to the peroxidase family. Classical plant (class III) peroxidase subfamily. Heme b serves as cofactor. The cofactor is Ca(2+).

It localises to the secreted. It catalyses the reaction 2 a phenolic donor + H2O2 = 2 a phenolic radical donor + 2 H2O. Its function is as follows. Removal of H(2)O(2), oxidation of toxic reductants, biosynthesis and degradation of lignin, suberization, auxin catabolism, response to environmental stresses such as wounding, pathogen attack and oxidative stress. These functions might be dependent on each isozyme/isoform in each plant tissue. In terms of biological role, suggested to catalyze the deposition of the aromatic residues of suberin on the cell wall and thus play a role in cell-suberization. The sequence is that of Suberization-associated anionic peroxidase 1 from Capsicum annuum (Capsicum pepper).